A 499-amino-acid chain; its full sequence is Catalase (499 aa).

Residues 1–25 (MTDRPIMTTSAGAPIPDNQNSLTAG) are disordered. Positions 7–23 (MTTSAGAPIPDNQNSLT) are enriched in polar residues. Catalysis depends on residues His55 and Asn127. Tyr337 serves as a coordination point for heme.

Belongs to the catalase family. As to quaternary structure, homotetramer. The cofactor is heme.

The protein localises to the periplasm. The enzyme catalyses 2 H2O2 = O2 + 2 H2O. Its function is as follows. Decomposes hydrogen peroxide into water and oxygen; serves to protect cells from the toxic effects of hydrogen peroxide. This Brucella abortus biovar 1 (strain 9-941) protein is Catalase (katA).